Consider the following 101-residue polypeptide: Putative fatty acid-binding protein 5-like protein 3 (101 aa).

It belongs to the calycin superfamily. Fatty-acid binding protein (FABP) family.

Its function is as follows. High specificity for fatty acids. This is Putative fatty acid-binding protein 5-like protein 3 (FABP5P3) from Homo sapiens (Human).